The sequence spans 705 residues: DNA ligase (705 aa).

NAD(+) contacts are provided by residues 43 to 47 (DAEYD), 92 to 93 (SL), and D123. The N6-AMP-lysine intermediate role is filled by K125. NAD(+) contacts are provided by R146, E184, K304, and K328. Residues C422, C425, C440, and C445 each contribute to the Zn(2+) site. One can recognise a BRCT domain in the interval 607 to 696 (TPVTPLAGKK…EEISGQAADD (90 aa)). A disordered region spans residues 684–705 (SESEEISGQAADDYENSLLRVQ).

It belongs to the NAD-dependent DNA ligase family. LigA subfamily. It depends on Mg(2+) as a cofactor. The cofactor is Mn(2+).

The catalysed reaction is NAD(+) + (deoxyribonucleotide)n-3'-hydroxyl + 5'-phospho-(deoxyribonucleotide)m = (deoxyribonucleotide)n+m + AMP + beta-nicotinamide D-nucleotide.. DNA ligase that catalyzes the formation of phosphodiester linkages between 5'-phosphoryl and 3'-hydroxyl groups in double-stranded DNA using NAD as a coenzyme and as the energy source for the reaction. It is essential for DNA replication and repair of damaged DNA. The chain is DNA ligase from Oleidesulfovibrio alaskensis (strain ATCC BAA-1058 / DSM 17464 / G20) (Desulfovibrio alaskensis).